We begin with the raw amino-acid sequence, 368 residues long: Chorismate synthase (368 aa).

2 residues coordinate NADP(+): arginine 48 and arginine 54. Residues 125–127 (RSS), 238–239 (NA), glycine 278, 293–297 (KPTSS), and arginine 319 each bind FMN.

It belongs to the chorismate synthase family. In terms of assembly, homotetramer. Requires FMNH2 as cofactor.

It catalyses the reaction 5-O-(1-carboxyvinyl)-3-phosphoshikimate = chorismate + phosphate. It participates in metabolic intermediate biosynthesis; chorismate biosynthesis; chorismate from D-erythrose 4-phosphate and phosphoenolpyruvate: step 7/7. Catalyzes the anti-1,4-elimination of the C-3 phosphate and the C-6 proR hydrogen from 5-enolpyruvylshikimate-3-phosphate (EPSP) to yield chorismate, which is the branch point compound that serves as the starting substrate for the three terminal pathways of aromatic amino acid biosynthesis. This reaction introduces a second double bond into the aromatic ring system. The sequence is that of Chorismate synthase from Methylibium petroleiphilum (strain ATCC BAA-1232 / LMG 22953 / PM1).